The primary structure comprises 330 residues: Probable allantoicase (330 aa).

This sequence belongs to the allantoicase family.

It catalyses the reaction allantoate + H2O = (S)-ureidoglycolate + urea. Its pathway is nitrogen metabolism; (S)-allantoin degradation; (S)-ureidoglycolate from allantoate (aminidohydrolase route): step 1/1. This Photobacterium profundum (strain SS9) protein is Probable allantoicase.